Consider the following 935-residue polypeptide: Protein translocase subunit SecA (935 aa).

ATP is bound by residues Gln86, 104–108 (GEGKT), and Asp494. The tract at residues 879-935 (EQAATARAQQHSSAAVAAPEQGATQRGAFGQRVSAADDAAPANRAERRAQKKPTKRH) is disordered.

This sequence belongs to the SecA family. As to quaternary structure, monomer and homodimer. Part of the essential Sec protein translocation apparatus which comprises SecA, SecYEG and auxiliary proteins SecDF. Other proteins may also be involved.

Its subcellular location is the cell membrane. The protein resides in the cytoplasm. It carries out the reaction ATP + H2O + cellular proteinSide 1 = ADP + phosphate + cellular proteinSide 2.. Its function is as follows. Part of the Sec protein translocase complex. Interacts with the SecYEG preprotein conducting channel. Has a central role in coupling the hydrolysis of ATP to the transfer of proteins into and across the cell membrane, serving as an ATP-driven molecular motor driving the stepwise translocation of polypeptide chains across the membrane. The sequence is that of Protein translocase subunit SecA from Leifsonia xyli subsp. xyli (strain CTCB07).